The chain runs to 130 residues: Large ribosomal subunit protein bL20c (130 aa).

Belongs to the bacterial ribosomal protein bL20 family.

The protein localises to the plastid. It is found in the chloroplast. Binds directly to 23S ribosomal RNA and is necessary for the in vitro assembly process of the 50S ribosomal subunit. It is not involved in the protein synthesizing functions of that subunit. The polypeptide is Large ribosomal subunit protein bL20c (Oenothera argillicola (Appalachian evening primrose)).